A 277-amino-acid polypeptide reads, in one-letter code: Ribosomal RNA small subunit methyltransferase A (277 aa).

Residues asparagine 23, leucine 25, glycine 50, glutamate 75, aspartate 98, and asparagine 121 each coordinate S-adenosyl-L-methionine.

This sequence belongs to the class I-like SAM-binding methyltransferase superfamily. rRNA adenine N(6)-methyltransferase family. RsmA subfamily.

It is found in the cytoplasm. It catalyses the reaction adenosine(1518)/adenosine(1519) in 16S rRNA + 4 S-adenosyl-L-methionine = N(6)-dimethyladenosine(1518)/N(6)-dimethyladenosine(1519) in 16S rRNA + 4 S-adenosyl-L-homocysteine + 4 H(+). Specifically dimethylates two adjacent adenosines (A1518 and A1519) in the loop of a conserved hairpin near the 3'-end of 16S rRNA in the 30S particle. May play a critical role in biogenesis of 30S subunits. The polypeptide is Ribosomal RNA small subunit methyltransferase A (Paraburkholderia xenovorans (strain LB400)).